Reading from the N-terminus, the 178-residue chain is Peptide methionine sulfoxide reductase MsrA (178 aa).

The active site involves C11.

The protein belongs to the MsrA Met sulfoxide reductase family.

The catalysed reaction is L-methionyl-[protein] + [thioredoxin]-disulfide + H2O = L-methionyl-(S)-S-oxide-[protein] + [thioredoxin]-dithiol. The enzyme catalyses [thioredoxin]-disulfide + L-methionine + H2O = L-methionine (S)-S-oxide + [thioredoxin]-dithiol. Has an important function as a repair enzyme for proteins that have been inactivated by oxidation. Catalyzes the reversible oxidation-reduction of methionine sulfoxide in proteins to methionine. In Natronomonas pharaonis (strain ATCC 35678 / DSM 2160 / CIP 103997 / JCM 8858 / NBRC 14720 / NCIMB 2260 / Gabara) (Halobacterium pharaonis), this protein is Peptide methionine sulfoxide reductase MsrA.